The sequence spans 362 residues: Ferrochelatase (362 aa).

Fe cation is bound by residues His228 and Glu309.

This sequence belongs to the ferrochelatase family.

Its subcellular location is the cytoplasm. The enzyme catalyses heme b + 2 H(+) = protoporphyrin IX + Fe(2+). It functions in the pathway porphyrin-containing compound metabolism; protoheme biosynthesis; protoheme from protoporphyrin-IX: step 1/1. Its function is as follows. Catalyzes the ferrous insertion into protoporphyrin IX. This Bordetella bronchiseptica (strain ATCC BAA-588 / NCTC 13252 / RB50) (Alcaligenes bronchisepticus) protein is Ferrochelatase.